A 1958-amino-acid chain; its full sequence is Probable Rho GTPase-activating protein CG5521 (1958 aa).

3 disordered regions span residues methionine 1–lysine 21, proline 400–arginine 424, and glycine 635–glycine 804. Over residues proline 400–serine 414 the composition is skewed to pro residues. The segment covering glycine 640–alanine 656 has biased composition (low complexity). Phosphoserine occurs at positions 718, 764, and 767. Residues aspartate 758–alanine 774 show a composition bias toward basic and acidic residues. The span at glutamate 775–asparagine 785 shows a compositional bias: acidic residues. Serine 787, serine 791, serine 793, and serine 795 each carry phosphoserine. The segment covering glycine 788–serine 800 has biased composition (polar residues). Tyrosine 980 carries the phosphotyrosine modification. The disordered stretch occupies residues histidine 1534–aspartate 1568. Positions alanine 1546–aspartate 1568 are enriched in polar residues. Residue serine 1551 is modified to Phosphoserine. Residues leucine 1612 to valine 1819 enclose the Rap-GAP domain. The tract at residues alanine 1903 to lysine 1958 is disordered. Threonine 1945 is subject to Phosphothreonine. The residue at position 1949 (serine 1949) is a Phosphoserine.

This Drosophila melanogaster (Fruit fly) protein is Probable Rho GTPase-activating protein CG5521.